A 381-amino-acid chain; its full sequence is Phenylalanine dehydrogenase (381 aa).

Arg55 lines the NAD(+) pocket. Lys79 is a binding site for L-phenylalanine. The active site involves Lys91. Residues Asp126, Ser157, Thr161, 191-197 (GLGKVGY), 214-215 (DI), 254-255 (AM), and 275-277 (SAN) contribute to the NAD(+) site. Asn277 contacts L-phenylalanine.

It belongs to the Glu/Leu/Phe/Val dehydrogenases family.

The catalysed reaction is L-phenylalanine + NAD(+) + H2O = 3-phenylpyruvate + NH4(+) + NADH + H(+). The protein operates within amino-acid biosynthesis; L-phenylalanine biosynthesis; L-phenylalanine from phenylpyruvate (PDH route): step 1/1. Catalyzes the reversible NAD(+)-dependent oxidative deamination of L-phenylalanine to phenylpyruvate. This is Phenylalanine dehydrogenase from Lysinibacillus sphaericus (Bacillus sphaericus).